The following is a 1035-amino-acid chain: Ephrin type-A receptor 6 (1035 aa).

Positions 1 to 22 are cleaved as a signal peptide; it reads MGGCEVREFLLQFGFFLPLLTA. The Extracellular segment spans residues 23–549; the sequence is WTGDCSHVSN…MAAEQGQILV (527 aa). The Eph LBD domain occupies 33-211; it reads QVVLLDTTTV…FYKKCPFTVR (179 aa). 2 consecutive Fibronectin type-III domains span residues 330–440 and 441–536; these read PPSA…TDHD and APSL…TGDE. N-linked (GlcNAc...) asparagine glycosylation is found at Asn-342, Asn-396, and Asn-409. Residues 550 to 570 form a helical membrane-spanning segment; it reads IATAAVGGFTLLVILTLFFLI. Over 571–1035 the chain is Cytoplasmic; the sequence is TGRCQWYIKA…MHIQEKGFHV (465 aa). Tyr-605 and Tyr-611 each carry phosphotyrosine; by autocatalysis. The 314-residue stretch at 630-943 folds into the Protein kinase domain; it reads IRIERVIGAG…RNPSALHTLV (314 aa). ATP is bound by residues 636–644 and Lys-662; that span reads IGAGEFGEV. The Proton acceptor role is filled by Asp-797. Phosphotyrosine; by autocatalysis occurs at positions 830 and 977. The 65-residue stretch at 960-1024 folds into the SAM domain; the sequence is PLFVTVGDWL…VSSIQTLRLH (65 aa). Residues 1033–1035 carry the PDZ-binding motif; the sequence is FHV.

This sequence belongs to the protein kinase superfamily. Tyr protein kinase family. Ephrin receptor subfamily. As to quaternary structure, heterotetramer upon binding of the ligand. The heterotetramer is composed of an ephrin dimer and a receptor dimer. Oligomerization is probably required to induce biological responses. Interacts (via SAM domain) with ANKS1A (via SAM domain).

The protein resides in the membrane. The enzyme catalyses L-tyrosyl-[protein] + ATP = O-phospho-L-tyrosyl-[protein] + ADP + H(+). Its function is as follows. Receptor tyrosine kinase which binds promiscuously GPI-anchored ephrin-A family ligands residing on adjacent cells, leading to contact-dependent bidirectional signaling into neighboring cells. The signaling pathway downstream of the receptor is referred to as forward signaling while the signaling pathway downstream of the ephrin ligand is referred to as reverse signaling. The polypeptide is Ephrin type-A receptor 6 (Epha6) (Mus musculus (Mouse)).